The chain runs to 257 residues: MNDSLVIRGIEFKSRLWVGTGKYKSFEETARAIEASGTDVVTVAVRRVNIIDRSKENLLDYIDPKKYKILPNTAGCYTVEDALRYARLAREAGVSDMVKLEVIGDEKTLFPDVCGLLKATEILAKEGFIVFPYTNDDPITAKRLVDAGAAAVMPLGAPIGSGLGIRNPYNIKIILETVNIPVIVDAGVGTASDVSIAMELGCDAVLVNTAIAGAKDPIMMAEALKHACIAGRLAYRAGRIPKKLYASASSPIEGMLT.

Lys-99 acts as the Schiff-base intermediate with DXP in catalysis. 1-deoxy-D-xylulose 5-phosphate contacts are provided by residues Gly-160, 186–187 (AG), and 208–209 (NT).

This sequence belongs to the ThiG family. Homotetramer. Forms heterodimers with either ThiH or ThiS.

The protein localises to the cytoplasm. It carries out the reaction [ThiS sulfur-carrier protein]-C-terminal-Gly-aminoethanethioate + 2-iminoacetate + 1-deoxy-D-xylulose 5-phosphate = [ThiS sulfur-carrier protein]-C-terminal Gly-Gly + 2-[(2R,5Z)-2-carboxy-4-methylthiazol-5(2H)-ylidene]ethyl phosphate + 2 H2O + H(+). It functions in the pathway cofactor biosynthesis; thiamine diphosphate biosynthesis. Functionally, catalyzes the rearrangement of 1-deoxy-D-xylulose 5-phosphate (DXP) to produce the thiazole phosphate moiety of thiamine. Sulfur is provided by the thiocarboxylate moiety of the carrier protein ThiS. In vitro, sulfur can be provided by H(2)S. The polypeptide is Thiazole synthase (Thermodesulfovibrio yellowstonii (strain ATCC 51303 / DSM 11347 / YP87)).